The following is a 371-amino-acid chain: tRNA-specific 2-thiouridylase MnmA (371 aa).

ATP-binding positions include A24–S31 and L50. C119 serves as the catalytic Nucleophile. C119 and C215 are joined by a disulfide. ATP is bound at residue G143. Residues K165 to Q167 form an interaction with tRNA region. C215 functions as the Cysteine persulfide intermediate in the catalytic mechanism.

The protein belongs to the MnmA/TRMU family.

The protein localises to the cytoplasm. It catalyses the reaction S-sulfanyl-L-cysteinyl-[protein] + uridine(34) in tRNA + AH2 + ATP = 2-thiouridine(34) in tRNA + L-cysteinyl-[protein] + A + AMP + diphosphate + H(+). Functionally, catalyzes the 2-thiolation of uridine at the wobble position (U34) of tRNA, leading to the formation of s(2)U34. The chain is tRNA-specific 2-thiouridylase MnmA from Neorickettsia sennetsu (strain ATCC VR-367 / Miyayama) (Ehrlichia sennetsu).